Here is a 142-residue protein sequence, read N- to C-terminus: HTH-type transcriptional regulator LrpA1 (142 aa).

The HTH asnC-type domain maps to methionine 1–aspartate 72. The H-T-H motif DNA-binding region spans tyrosine 22–aspartate 41.

Transcription factor that regulates genes involved in amino acid metabolism. Represses the aspB3 gene, coding for an aspartate transaminase, in the presence of L-aspartate. Another target gene is the basal transcriptional regulator tfbB. Also binds its own promoter. This Halobacterium salinarum (strain ATCC 29341 / DSM 671 / R1) protein is HTH-type transcriptional regulator LrpA1 (lrpA1).